Consider the following 273-residue polypeptide: Large ribosomal subunit protein uL2 (273 aa).

The interval 221–262 (RGTAMNPVDHPHGGGEGRNFGKHPVTPWGVQTKGKKTRHNKR) is disordered. The span at 253-262 (KGKKTRHNKR) shows a compositional bias: basic residues.

The protein belongs to the universal ribosomal protein uL2 family. Part of the 50S ribosomal subunit. Forms a bridge to the 30S subunit in the 70S ribosome.

Its function is as follows. One of the primary rRNA binding proteins. Required for association of the 30S and 50S subunits to form the 70S ribosome, for tRNA binding and peptide bond formation. It has been suggested to have peptidyltransferase activity; this is somewhat controversial. Makes several contacts with the 16S rRNA in the 70S ribosome. This chain is Large ribosomal subunit protein uL2, found in Haemophilus ducreyi (strain 35000HP / ATCC 700724).